Reading from the N-terminus, the 263-residue chain is Small ribosomal subunit protein uS3 (263 aa).

The 69-residue stretch at 39 to 107 (VREYLKKKLK…PVHVNIEEIR (69 aa)) folds into the KH type-2 domain. The disordered stretch occupies residues 211-263 (GELPPEAATPREEERRPRRAPRGDRPDGGRPGRPGGRGRGPRKADAAPAPEGE). The span at 219–240 (TPREEERRPRRAPRGDRPDGGR) shows a compositional bias: basic and acidic residues.

It belongs to the universal ribosomal protein uS3 family. As to quaternary structure, part of the 30S ribosomal subunit. Forms a tight complex with proteins S10 and S14.

Its function is as follows. Binds the lower part of the 30S subunit head. Binds mRNA in the 70S ribosome, positioning it for translation. In Bordetella petrii (strain ATCC BAA-461 / DSM 12804 / CCUG 43448), this protein is Small ribosomal subunit protein uS3.